Reading from the N-terminus, the 548-residue chain is Membrane protein insertase YidC (548 aa).

The chain crosses the membrane as a helical span at residues 6–26 (NLFLIAFLFVSFMIWQAWQTD). The segment at 30-53 (QPLQTQTTQNTTSAAGDAVNQGVP) is disordered. 4 helical membrane passes run 345-365 (KFLH…TFIV), 420-440 (LGGC…YYML), 458-478 (LAAQ…MFFI), and 499-519 (PVIF…YYIV).

It belongs to the OXA1/ALB3/YidC family. Type 1 subfamily. In terms of assembly, interacts with the Sec translocase complex via SecD. Specifically interacts with transmembrane segments of nascent integral membrane proteins during membrane integration.

The protein localises to the cell inner membrane. Functionally, required for the insertion and/or proper folding and/or complex formation of integral membrane proteins into the membrane. Involved in integration of membrane proteins that insert both dependently and independently of the Sec translocase complex, as well as at least some lipoproteins. Aids folding of multispanning membrane proteins. This Erwinia tasmaniensis (strain DSM 17950 / CFBP 7177 / CIP 109463 / NCPPB 4357 / Et1/99) protein is Membrane protein insertase YidC.